We begin with the raw amino-acid sequence, 343 residues long: Anthranilate phosphoribosyltransferase (343 aa).

5-phospho-alpha-D-ribose 1-diphosphate is bound by residues glycine 81, 84–85 (GD), 91–94 (NVST), 109–117 (KHGNRSVSS), and serine 121. Position 81 (glycine 81) interacts with anthranilate. Position 93 (serine 93) interacts with Mg(2+). Residue asparagine 112 participates in anthranilate binding. Arginine 167 is an anthranilate binding site. 2 residues coordinate Mg(2+): aspartate 226 and glutamate 227.

It belongs to the anthranilate phosphoribosyltransferase family. As to quaternary structure, homodimer. Mg(2+) serves as cofactor.

The enzyme catalyses N-(5-phospho-beta-D-ribosyl)anthranilate + diphosphate = 5-phospho-alpha-D-ribose 1-diphosphate + anthranilate. Its pathway is amino-acid biosynthesis; L-tryptophan biosynthesis; L-tryptophan from chorismate: step 2/5. Its function is as follows. Catalyzes the transfer of the phosphoribosyl group of 5-phosphorylribose-1-pyrophosphate (PRPP) to anthranilate to yield N-(5'-phosphoribosyl)-anthranilate (PRA). This Chromohalobacter salexigens (strain ATCC BAA-138 / DSM 3043 / CIP 106854 / NCIMB 13768 / 1H11) protein is Anthranilate phosphoribosyltransferase.